Reading from the N-terminus, the 446-residue chain is Tubulin beta chain (446 aa).

GTP is bound by residues glutamine 11, glutamate 69, serine 138, glycine 142, threonine 143, glycine 144, asparagine 204, and asparagine 226. Glutamate 69 is a Mg(2+) binding site. The segment at 423–446 is disordered; that stretch reads QQYQDAGVDEEEEEYEEEPLPEDE. A compositionally biased stretch (acidic residues) spans 429–446; sequence GVDEEEEEYEEEPLPEDE.

It belongs to the tubulin family. In terms of assembly, dimer of alpha and beta chains. A typical microtubule is a hollow water-filled tube with an outer diameter of 25 nm and an inner diameter of 15 nM. Alpha-beta heterodimers associate head-to-tail to form protofilaments running lengthwise along the microtubule wall with the beta-tubulin subunit facing the microtubule plus end conferring a structural polarity. Microtubules usually have 13 protofilaments but different protofilament numbers can be found in some organisms and specialized cells. Mg(2+) is required as a cofactor.

The protein resides in the cytoplasm. Its subcellular location is the cytoskeleton. Tubulin is the major constituent of microtubules, a cylinder consisting of laterally associated linear protofilaments composed of alpha- and beta-tubulin heterodimers. Microtubules grow by the addition of GTP-tubulin dimers to the microtubule end, where a stabilizing cap forms. Below the cap, tubulin dimers are in GDP-bound state, owing to GTPase activity of alpha-tubulin. The polypeptide is Tubulin beta chain (TUBB) (Pestalotiopsis microspora).